Here is a 261-residue protein sequence, read N- to C-terminus: Kallikrein 1-related peptidase b11 (261 aa).

The N-terminal stretch at 1-18 (MWFLILFLALSLGGIDAA) is a signal peptide. Positions 19–24 (PPVQSR) are cleaved as a propeptide — activation peptide. The 234-residue stretch at 25-258 (IVGGFNCEKN…FTNWIKDTMA (234 aa)) folds into the Peptidase S1 domain. Intrachain disulfides connect Cys-31-Cys-173, Cys-50-Cys-66, Cys-152-Cys-219, Cys-184-Cys-198, and Cys-209-Cys-234. His-65 (charge relay system) is an active-site residue. N-linked (GlcNAc...) asparagine glycosylation occurs at Asn-102. Asp-120 acts as the Charge relay system in catalysis. Ser-213 serves as the catalytic Charge relay system.

The protein belongs to the peptidase S1 family. Kallikrein subfamily.

It carries out the reaction Preferential cleavage of Arg-|-Xaa bonds in small molecule substrates. Highly selective action to release kallidin (lysyl-bradykinin) from kininogen involves hydrolysis of Met-|-Xaa or Leu-|-Xaa.. Its function is as follows. Glandular kallikreins cleave Met-Lys and Arg-Ser bonds in kininogen to release Lys-bradykinin. The protein is Kallikrein 1-related peptidase b11 (Klk1b11) of Mus musculus (Mouse).